A 198-amino-acid polypeptide reads, in one-letter code: Recombination protein RecR (198 aa).

A C4-type zinc finger spans residues 57-72 (CRQCRTLSEEELCPQC). Positions 80-174 (SLLCVVEGPL…TLSRIAHGVP (95 aa)) constitute a Toprim domain.

This sequence belongs to the RecR family.

May play a role in DNA repair. It seems to be involved in an RecBC-independent recombinational process of DNA repair. It may act with RecF and RecO. The chain is Recombination protein RecR from Pseudomonas paraeruginosa (strain DSM 24068 / PA7) (Pseudomonas aeruginosa (strain PA7)).